The chain runs to 151 residues: Large ribosomal subunit protein bL9 (151 aa).

It belongs to the bacterial ribosomal protein bL9 family.

Binds to the 23S rRNA. The polypeptide is Large ribosomal subunit protein bL9 (Chloroherpeton thalassium (strain ATCC 35110 / GB-78)).